The chain runs to 259 residues: Bisphosphoglycerate mutase (259 aa).

Position 2 is an N-acetylserine (S2). Residues 10 to 17 (RHGEGAWN), 23 to 24 (CS), R62, 89 to 92 (ERHY), R100, and 116 to 117 (RR) contribute to the substrate site. H11 (tele-phosphohistidine intermediate) is an active-site residue. E89 acts as the Proton donor/acceptor in catalysis. Phosphothreonine is present on T122. Residue 189-190 (GN) participates in substrate binding.

Belongs to the phosphoglycerate mutase family. BPG-dependent PGAM subfamily. In terms of assembly, homodimer. Expressed in red blood cells.

The catalysed reaction is (2R)-3-phospho-glyceroyl phosphate = (2R)-2,3-bisphosphoglycerate + H(+). It carries out the reaction (2R)-2-phosphoglycerate = (2R)-3-phosphoglycerate. With respect to regulation, at alkaline pH BPGM favors the synthase reaction; however, at lower pH the phosphatase reaction is dominant. Inhibited by citrate. Plays a major role in regulating hemoglobin oxygen affinity by controlling the levels of its allosteric effector 2,3-bisphosphoglycerate (2,3-BPG). Also exhibits mutase (EC 5.4.2.11) activity. This Oryctolagus cuniculus (Rabbit) protein is Bisphosphoglycerate mutase (BPGM).